Consider the following 191-residue polypeptide: Apoptosis regulator BHRF1 (191 aa).

The tract at residues 1 to 18 is interaction with host VRK2; sequence MAYSTREILLALCIRDSR. N-linked (GlcNAc...) asparagine; by host glycosylation is present at N22. Positions 89–109 match the BH1 motif; that stretch reads EIFHRGDPSLGRALAWMAWCM. The segment at 89-142 is interaction with host VRK2; that stretch reads EIFHRGDPSLGRALAWMAWCMHACRTLCCNQSTPYYVVDLSVRGMLEASEGLDG. N-linked (GlcNAc...) asparagine; by host glycosylation is present at N118. A BH2 motif is present at residues 142-157; the sequence is GWIHQQGGWSTLIEDN. A helical membrane pass occupies residues 166–186; sequence WTLFLAGLTLSLLVICSYLFI.

It belongs to the Bcl-2 family. In terms of assembly, interacts with isoform 1 of host VRK2; this interaction is involved in protecting cells from apoptosis. Interacts with host PRA1; this interaction seems to modulate BHRF1 anti-apoptotic activity. Interacts with host BCL2L11. Interacts with host BAD and BBC3. Interacts with BALF1; BALF1 acting as a negative regulator of the survival function of BHRF1. Interacts with host BECN1.

The protein resides in the host membrane. The protein localises to the host mitochondrion. In terms of biological role, prevents premature death of the host cell during virus production, which would otherwise reduce the amount of progeny virus. Acts as a host B-cell leukemia/lymphoma 2 (Bcl-2) homolog, and interacts with pro-apoptotic proteins to prevent mitochondria permeabilization, release of cytochrome c and subsequent apoptosis of the host cell. In addition, plays a role in the inhibiton of host BECN1-mediated starvation-induced autophagy without affecting basal levels of autophagy. The polypeptide is Apoptosis regulator BHRF1 (Epstein-Barr virus (strain GD1) (HHV-4)).